The sequence spans 498 residues: MGLFNRLFGKKRQEEKSTTDSIEEAAEQEVTQEKPALLAETAETAESQQSVYEKDVTESQAEQVSDARIIEDGQNSKEPAASGHSVQEHKQQPVQHQQEVFHSENSVAAVQNNTETMPSQQKKDEKPNQSPDFMAEYYARKAELAQKVESQKPAETAEQESQTTLSDQKETETAVNQSEEEASSQIAESVESEEEKYNRSLKKTRTGFGARLNAFLANFRNVDEEFFEDLEEMLILSDVGVQVASTLTEDLRYEAKLEKAKKPEALRRVIIEKLVDIYDKDGQFNEKINFQNDLTVMLFVGVNGVGKTTSIGKLAYKYKHQGKKVMLVAADTFRAGAVAQLAEWGRRVDVPVVTGPKNADPASVVYDGVERAVAADVDILMIDTAGRLQNKDNLMAELEKIGRVVKRVIPDAPHETLLTLDASTGQNALVQAKEFSKITPLTGLILTKIDGTAKGGVVLAIRQELAIPVKFIGFGEKIDDIGEFHSEDFMRGLLEGLL.

Disordered stretches follow at residues 1–130 (MGLF…PNQS) and 147–200 (KVES…YNRS). Residues 36-46 (ALLAETAETAE) show a composition bias toward low complexity. The segment covering 103–120 (SENSVAAVQNNTETMPSQ) has biased composition (polar residues). Residues 301 to 308 (GVNGVGKT), 383 to 387 (DTAGR), and 447 to 450 (TKID) contribute to the GTP site.

Belongs to the GTP-binding SRP family. FtsY subfamily. Part of the signal recognition particle protein translocation system, which is composed of SRP and FtsY.

It is found in the cell membrane. The protein resides in the cytoplasm. The enzyme catalyses GTP + H2O = GDP + phosphate + H(+). In terms of biological role, involved in targeting and insertion of nascent membrane proteins into the cytoplasmic membrane. Acts as a receptor for the complex formed by the signal recognition particle (SRP) and the ribosome-nascent chain (RNC). This is Signal recognition particle receptor FtsY from Streptococcus mutans serotype c (strain ATCC 700610 / UA159).